The primary structure comprises 654 residues: NADPH-dependent diflavin oxidoreductase 1 (654 aa).

The 153-residue stretch at 14–166 folds into the Flavodoxin-like domain; it reads ALVLYGSETG…TFIPWITDFR (153 aa). FMN contacts are provided by residues 20–25, 75–78, and 113–122; these read SETGNA, STTG, and LGDSSYPKFN. In terms of domain architecture, FAD-binding FR-type spans 235–485; the sequence is PDALTATLVE…QLQRGGLSSS (251 aa). FAD contacts are provided by residues arginine 389, 419–422, and 458–461; these read RQFS and GVCT. NADP(+) contacts are provided by residues threonine 500, 568–569, and 574–578; these read SR and KIYVQ. Tryptophan 654 contributes to the FAD binding site.

The protein belongs to the NADPH-dependent diflavin oxidoreductase NDOR1 family. This sequence in the N-terminal section; belongs to the flavodoxin family. In the C-terminal section; belongs to the flavoprotein pyridine nucleotide cytochrome reductase family. In terms of assembly, interacts with dre2; as part of the cytosolic iron-sulfur (Fe-S) protein assembly (CIA) machinery. Requires FAD as cofactor. It depends on FMN as a cofactor.

Its subcellular location is the cytoplasm. The protein resides in the mitochondrion. The catalysed reaction is 2 oxidized [2Fe-2S]-[protein] + NADPH = 2 reduced [2Fe-2S]-[protein] + NADP(+) + H(+). In terms of biological role, NADPH-dependent reductase which is a central component of the cytosolic iron-sulfur (Fe-S) protein assembly (CIA) machinery. Transfers electrons from NADPH via its FAD and FMN prosthetic groups to the [2Fe-2S] cluster of dre2, another key component of the CIA machinery. In turn, this reduced cluster provides electrons for assembly of cytosolic iron-sulfur cluster proteins. Positively controls H(2)O(2)-induced cell death. The protein is NADPH-dependent diflavin oxidoreductase 1 of Aspergillus fumigatus (strain ATCC MYA-4609 / CBS 101355 / FGSC A1100 / Af293) (Neosartorya fumigata).